The primary structure comprises 256 residues: Putative ankyrin repeat protein PAE1861 (256 aa).

8 ANK repeats span residues 1 to 30 (MDCNNLLNAARRGEAELLTRLLNEGCSPDV), 34 to 63 (YGRTPLYYAAERGDVGTVDLLIKAGADPNA), 67 to 92 (EGKTPIIIATQSRKFGVIPLLSASAV), 93 to 122 (GVEEALYTAARNGCHKAVRYMLARGVRPGA), 124 to 151 (HGESLLHLVAGDAGLVKLLLEYGVDPNA), 155 to 184 (HGKTPLHMASEHNCAQCVELLLKRGPDVNV), 188 to 214 (AGRTPLHYADDVDCIKLLLRYGADLNA), and 218 to 245 (MGRTPLHYAEDGLAAEALLKRGARPVPD).

This chain is Putative ankyrin repeat protein PAE1861, found in Pyrobaculum aerophilum (strain ATCC 51768 / DSM 7523 / JCM 9630 / CIP 104966 / NBRC 100827 / IM2).